A 497-amino-acid polypeptide reads, in one-letter code: NAD(P)H-quinone oxidoreductase chain 4, chloroplastic (497 aa).

Transmembrane regions (helical) follow at residues leucine 4 to phenylalanine 24, tyrosine 35 to phenylalanine 55, methionine 87 to valine 107, leucine 113 to aspartate 133, isoleucine 134 to isoleucine 154, phenylalanine 167 to leucine 187, isoleucine 207 to isoleucine 227, histidine 242 to isoleucine 262, alanine 274 to isoleucine 294, methionine 313 to leucine 333, leucine 386 to isoleucine 406, isoleucine 416 to methionine 436, and isoleucine 462 to valine 482.

The protein belongs to the complex I subunit 4 family.

The protein resides in the plastid. It localises to the chloroplast thylakoid membrane. It carries out the reaction a plastoquinone + NADH + (n+1) H(+)(in) = a plastoquinol + NAD(+) + n H(+)(out). The enzyme catalyses a plastoquinone + NADPH + (n+1) H(+)(in) = a plastoquinol + NADP(+) + n H(+)(out). In Angiopteris evecta (Mule's foot fern), this protein is NAD(P)H-quinone oxidoreductase chain 4, chloroplastic.